A 160-amino-acid chain; its full sequence is Cyclic pyranopterin monophosphate synthase (160 aa).

Substrate-binding positions include M77–H79 and M114–E115. D129 is a catalytic residue.

This sequence belongs to the MoaC family. In terms of assembly, homohexamer; trimer of dimers.

The catalysed reaction is (8S)-3',8-cyclo-7,8-dihydroguanosine 5'-triphosphate = cyclic pyranopterin phosphate + diphosphate. It functions in the pathway cofactor biosynthesis; molybdopterin biosynthesis. In terms of biological role, catalyzes the conversion of (8S)-3',8-cyclo-7,8-dihydroguanosine 5'-triphosphate to cyclic pyranopterin monophosphate (cPMP). The protein is Cyclic pyranopterin monophosphate synthase of Listeria monocytogenes serotype 4b (strain F2365).